A 550-amino-acid chain; its full sequence is CCR4-NOT transcription complex subunit 6-like-B (550 aa).

The segment at 1 to 148 (MPKEKYDPPD…LYQEPDGMRK (148 aa)) is required for interaction with cnot1, cnot3 and cnot7. 4 LRR repeats span residues 52 to 73 (HLTV…IAKL), 75 to 96 (NLVY…LGNV), 98 to 120 (SLRE…GRLF), and 121 to 143 (RLQT…YQEP). A nuclease domain region spans residues 153–550 (MLDNLSVHPE…INGVHLPSRR (398 aa)). Residue E235 participates in Mg(2+) binding. E235, E271, H355, and P360 together coordinate substrate. D405 lines the Mg(2+) pocket. Catalysis depends on D405, which acts as the Proton donor/acceptor. Substrate is bound by residues N407, N474, and F479.

The protein belongs to the CCR4/nocturin family. As to quaternary structure, component of the CCR4-NOT complex. Mg(2+) serves as cofactor.

It localises to the cytoplasm. It is found in the nucleus. It carries out the reaction Exonucleolytic cleavage of poly(A) to 5'-AMP.. Poly(A) nuclease with 3'-5' RNase activity. Catalytic component of the CCR4-NOT complex which is one of the major cellular mRNA deadenylases and is linked to various cellular processes including bulk mRNA degradation, miRNA-mediated repression, translational repression during translational initiation and general transcription regulation. Additional complex functions may be a consequence of its influence on mRNA expression. In Xenopus laevis (African clawed frog), this protein is CCR4-NOT transcription complex subunit 6-like-B (cnot6l-b).